A 117-amino-acid chain; its full sequence is Immunoglobulin heavy variable 5-10-1 (117 aa).

The N-terminal stretch at 1 to 19 is a signal peptide; the sequence is MGSTAILALLLAVLQGVCA. Positions 20–44 are framework-1; it reads EVQLVQSGAEVKKPGESLRISCKGS. Positions 20–117 constitute an Ig-like domain; it reads EVQLVQSGAE…SDTAMYYCAR (98 aa). Cysteines 41 and 115 form a disulfide. Residues 45–52 form a complementarity-determining-1 region; the sequence is GYSFTSYW. The segment at 53 to 69 is framework-2; it reads ISWVRQMPGKGLEWMGR. The segment at 70–77 is complementarity-determining-2; sequence IDPSDSYT. A framework-3 region spans residues 78–115; that stretch reads NYSPSFQGHVTISADKSISTAYLQWSSLKASDTAMYYC. A complementarity-determining-3 region spans residues 116-117; it reads AR.

In terms of assembly, immunoglobulins are composed of two identical heavy chains and two identical light chains; disulfide-linked.

It localises to the secreted. The protein resides in the cell membrane. Its function is as follows. V region of the variable domain of immunoglobulin heavy chains that participates in the antigen recognition. Immunoglobulins, also known as antibodies, are membrane-bound or secreted glycoproteins produced by B lymphocytes. In the recognition phase of humoral immunity, the membrane-bound immunoglobulins serve as receptors which, upon binding of a specific antigen, trigger the clonal expansion and differentiation of B lymphocytes into immunoglobulins-secreting plasma cells. Secreted immunoglobulins mediate the effector phase of humoral immunity, which results in the elimination of bound antigens. The antigen binding site is formed by the variable domain of one heavy chain, together with that of its associated light chain. Thus, each immunoglobulin has two antigen binding sites with remarkable affinity for a particular antigen. The variable domains are assembled by a process called V-(D)-J rearrangement and can then be subjected to somatic hypermutations which, after exposure to antigen and selection, allow affinity maturation for a particular antigen. In Homo sapiens (Human), this protein is Immunoglobulin heavy variable 5-10-1.